A 38-amino-acid chain; its full sequence is Allatostatin-C (38 aa).

Positions 1 to 19 (MRRALDGPGSSSLDTRQAD) are excised as a propeptide. Gln22 bears the Pyrrolidone carboxylic acid; partial mark.

It belongs to the allatostatin family. In its non-pyroglutamate form, expressed in antennal lobe (AL), corpora cardiaca (CC), corpora allata (CA) and gnathal ganglion (GNG) with expression in AL detected in most animals and expression in CC, CA and GNG detected in few animals (at protein level). In its pyroglutamate form, expressed in antennal lobe (AL), corpora cardiaca (CC) and corpora allata (CA) with expression detected in few animals (at protein level). Not expressed in GNG (protein level).

It is found in the secreted. In terms of biological role, strongly inhibits juvenile hormone biosynthesis. The sequence is that of Allatostatin-C from Agrotis ipsilon (Black cutworm moth).